A 556-amino-acid polypeptide reads, in one-letter code: Glutamine--tRNA ligase (556 aa).

Residues 35 to 45 carry the 'HIGH' region motif; it reads PEPNGYLHIGH. Residues 36–38 and 42–48 contribute to the ATP site; these read EPN and HIGHAKS. L-glutamine-binding residues include aspartate 68 and tyrosine 213. Residues threonine 232 and 262–263 each bind ATP; that span reads RL. Residues 269-273 carry the 'KMSKS' region motif; it reads VTSKR.

It belongs to the class-I aminoacyl-tRNA synthetase family. Monomer.

The protein localises to the cytoplasm. It catalyses the reaction tRNA(Gln) + L-glutamine + ATP = L-glutaminyl-tRNA(Gln) + AMP + diphosphate. This Pseudomonas aeruginosa (strain ATCC 15692 / DSM 22644 / CIP 104116 / JCM 14847 / LMG 12228 / 1C / PRS 101 / PAO1) protein is Glutamine--tRNA ligase.